Consider the following 213-residue polypeptide: Cytochrome b6 (213 aa).

Residues 30 to 50 traverse the membrane as a helical segment; it reads IFYCLGGLTLLAFLVQCVTGL. Residue cysteine 33 participates in heme c binding. Heme b-binding residues include histidine 84 and histidine 98. The next 3 membrane-spanning stretches (helical) occupy residues 88 to 108, 114 to 134, and 184 to 204; these read ANLM…TGSF, LNWL…FTGY, and LHVM…FIMI. Heme b contacts are provided by histidine 185 and histidine 200.

Belongs to the cytochrome b family. PetB subfamily. As to quaternary structure, the subunits of the cytochrome bc complex are a Rieske Fe-S protein (PetC), cytochrome b6 (PetB), subunit IV (PetD), and a diheme cytochrome c (PetX). Heme b serves as cofactor. It depends on heme c as a cofactor.

The protein localises to the cell membrane. In terms of biological role, component of the cytochrome bc complex which donates electrons to the photosynthetic reaction center. The sequence is that of Cytochrome b6 from Heliobacterium mobile (Heliobacillus mobilis).